The primary structure comprises 347 residues: NADH-ubiquinone oxidoreductase chain 2 (347 aa).

The next 11 helical transmembrane spans lie at 1-21 (MNPL…LITA), 25-45 (HWFL…PVLT), 55-75 (AAIK…MAIL), 96-116 (LMIL…FWVP), 123-143 (TLTS…SIMY), 145-165 (IFPV…IMVG), 178-198 (ILAY…PYNP), 199-219 (NITI…FLAL), 237-257 (LTWL…LPPL), 274-294 (GTLI…YFYM), and 324-344 (LLLP…PLTF).

Belongs to the complex I subunit 2 family. As to quaternary structure, core subunit of respiratory chain NADH dehydrogenase (Complex I) which is composed of 45 different subunits. Interacts with TMEM242.

Its subcellular location is the mitochondrion inner membrane. The enzyme catalyses a ubiquinone + NADH + 5 H(+)(in) = a ubiquinol + NAD(+) + 4 H(+)(out). Core subunit of the mitochondrial membrane respiratory chain NADH dehydrogenase (Complex I) which catalyzes electron transfer from NADH through the respiratory chain, using ubiquinone as an electron acceptor. Essential for the catalytic activity and assembly of complex I. This chain is NADH-ubiquinone oxidoreductase chain 2, found in Symphalangus syndactylus (Siamang).